Reading from the N-terminus, the 127-residue chain is Fluoride-specific ion channel FluC (127 aa).

Transmembrane regions (helical) follow at residues 4 to 24, 35 to 55, 71 to 91, and 103 to 123; these read TLLA…QLGV, LGTL…LAFF, TGLC…VMFL, and VLLN…LVTW. Positions 75 and 78 each coordinate Na(+).

The protein belongs to the fluoride channel Fluc/FEX (TC 1.A.43) family.

The protein resides in the cell inner membrane. The catalysed reaction is fluoride(in) = fluoride(out). With respect to regulation, na(+) is not transported, but it plays an essential structural role and its presence is essential for fluoride channel function. Functionally, fluoride-specific ion channel. Important for reducing fluoride concentration in the cell, thus reducing its toxicity. This Pectobacterium atrosepticum (strain SCRI 1043 / ATCC BAA-672) (Erwinia carotovora subsp. atroseptica) protein is Fluoride-specific ion channel FluC.